Here is a 198-residue protein sequence, read N- to C-terminus: Ion-translocating oxidoreductase complex subunit B (198 aa).

Positions 1 to 26 are hydrophobic; sequence MTTIMIAVLAIALLATLFGAILGFAS. The 59-residue stretch at 32-90 folds into the 4Fe-4S domain; sequence EADPIVDQIDAILPQTQCGQCGYPGCRPYAEAIANGDSINKCPPGGQATIEKLADLMGV. Residues Cys-49, Cys-52, Cys-57, Cys-73, Cys-114, Cys-117, Cys-120, Cys-124, Cys-144, Cys-147, Cys-150, and Cys-154 each contribute to the [4Fe-4S] cluster site. 4Fe-4S ferredoxin-type domains lie at 105–134 and 135–164; these read KVAF…GGTK and ALHT…MIPL.

This sequence belongs to the 4Fe4S bacterial-type ferredoxin family. RnfB subfamily. In terms of assembly, the complex is composed of six subunits: RnfA, RnfB, RnfC, RnfD, RnfE and RnfG. The cofactor is [4Fe-4S] cluster.

It localises to the cell inner membrane. Its function is as follows. Part of a membrane-bound complex that couples electron transfer with translocation of ions across the membrane. This Vibrio vulnificus (strain CMCP6) protein is Ion-translocating oxidoreductase complex subunit B.